The following is a 932-amino-acid chain: MMKKITERQSPLKLLEKKRAKAPEQPTPPIQEEPEPVSNVLQGDDILALAIKKEDLRKQHVPQFEETGEKPVVTQKFIIRKLKPKDSSKRVYHLVAHPATPDAATKPLDYSGPHDSFLSSGQILPHQILGSLQDFKRIAVARGNTQLAKLIHIQPCLMTLISAKEEPKPKPPKEEERPSPWAPPPQHNFLKNWRRHIALRKKQQEALSKHLKKPASELLMHTGESYRKIQEEREVIDRALPTQHDGKATSWFWSPLEYLGDEMTGLLMTKKKTQRGLVEPITHIRKPLSIQVETGLPAQKDAWYRYTWDRSLFLIYRRKELQSIMAELDFSQQDIDGLEVVGHGKPFSSVTVEEHLPPEKIQKSSSEDTVFLDSLTNLSDMVPMPILGPSLLFCGKPACWVRGSNPEDKKNIGIGVRLTFETLEGERTSSELTVVNNGTVAIWYNWRRRPHQDFFQDLKQNKTQRFYFNNREGVILPGETKHFTFFFKSLNAGIFRESWEFGTHPTLLGGAVLQVTLHAISLTQDIFMDERKLLETKLAAHEAITIAQSVLQDLLRGISTPERTPSPVDAYLTEEDLFNYRNPRLHYQHQVVQNLHQLWQQYRKAKATQKETPSLRTPVPLLLVEKASGSISPRNLVSEYSQLSPHQEMDTARKTRDFFLSLKSSIGKKSVARKSIMEELLVEEGPDRETTQRPWALKSISPPKWNLCLEDFRQAVMTFPEELQREDALIQLNKAAMELCQEQKPLQSDLLYQMCLQLWRDVIDSLVSQSLWLRNLLGLPEKETVYLDLPDEQGQKSPPVTESKVTSGKAGKEDRRGGAQEKKQLGTKDKDDKRGSKTPGKEDRPNSKKLKPKDDKKVVKSASRDRLLSEDPPPDSTAPSQEPIDPLVMEKYTQRLHAEVYALLDNLVTDVMVLADELSSTKNVEESLRFCS.

2 disordered regions span residues 1-39 and 165-187; these read MMKK…PVSN and EEPK…PPQH. Basic and acidic residues predominate over residues 165-178; that stretch reads EEPKPKPPKEEERP. The residue at position 559 (Ser559) is a Phosphoserine. At Thr560 the chain carries Phosphothreonine. Ser566 carries the post-translational modification Phosphoserine. The segment at 789-886 is disordered; sequence LPDEQGQKSP…TAPSQEPIDP (98 aa). The span at 795 to 806 shows a compositional bias: polar residues; it reads QKSPPVTESKVT. Residues 810–869 show a composition bias toward basic and acidic residues; it reads AGKEDRRGGAQEKKQLGTKDKDDKRGSKTPGKEDRPNSKKLKPKDDKKVVKSASRDRLLS.

Interacts with MYCBP.

It is found in the cytoplasm. The protein localises to the membrane. Its function is as follows. May play a role in spermatogenesis. May be involved in synaptic processes. This Mus musculus (Mouse) protein is MYCBP-associated protein.